A 310-amino-acid chain; its full sequence is Protoheme IX farnesyltransferase (310 aa).

A run of 9 helical transmembrane segments spans residues 30 to 47 (VTTLIVMTAWTGAFFGAA), 50 to 70 (GLPLVSWTLFHALLGIGLVSG), 102 to 122 (LGHGMVVSLVMMIGGAGYLGL), 126 to 146 (WLTAALALMTSVVYLMAYTPL), 152 to 172 (ICTTIGAFPGAMPPVLGWTAI), 181 to 201 (VALFAILFFWQFPHFHSIAWL), 228 to 248 (IVIYAAFLLPITLTPFLLRFA), 251 to 271 (IYFLAALVLGSMLFWVSLRMF), and 286 to 306 (ARQLLLASVTYLPLLFAVMML).

The protein belongs to the UbiA prenyltransferase family. Protoheme IX farnesyltransferase subfamily.

It localises to the cell inner membrane. It carries out the reaction heme b + (2E,6E)-farnesyl diphosphate + H2O = Fe(II)-heme o + diphosphate. The protein operates within porphyrin-containing compound metabolism; heme O biosynthesis; heme O from protoheme: step 1/1. In terms of biological role, converts heme B (protoheme IX) to heme O by substitution of the vinyl group on carbon 2 of heme B porphyrin ring with a hydroxyethyl farnesyl side group. This is Protoheme IX farnesyltransferase from Koribacter versatilis (strain Ellin345).